We begin with the raw amino-acid sequence, 71 residues long: IRCFITPDITSKDCPNGHVCYTKTWCDGFCSRRGERVDLGCAATCPTVKTGVDIQCCSTDDCDPFPTRKRP.

5 cysteine pairs are disulfide-bonded: Cys-3-Cys-20, Cys-14-Cys-41, Cys-26-Cys-30, Cys-45-Cys-56, and Cys-57-Cys-62.

This sequence belongs to the three-finger toxin family. Long-chain subfamily. Type II alpha-neurotoxin sub-subfamily. As to expression, expressed by the venom gland.

The protein localises to the secreted. Functionally, binds with high affinity to muscular (alpha-1/CHRNA1) and neuronal (alpha-7/CHRNA7) nicotinic acetylcholine receptor (nAChR) and inhibits acetylcholine from binding to the receptor, thereby impairing neuromuscular and neuronal transmission. The sequence is that of Long neurotoxin 5 from Naja naja (Indian cobra).